Reading from the N-terminus, the 746-residue chain is 4-hydroxy-3-methylbut-2-en-1-yl diphosphate synthase (flavodoxin) (746 aa).

[4Fe-4S] cluster is bound by residues C653, C656, C687, and E694.

This sequence belongs to the IspG family. It depends on [4Fe-4S] cluster as a cofactor.

The catalysed reaction is (2E)-4-hydroxy-3-methylbut-2-enyl diphosphate + oxidized [flavodoxin] + H2O + 2 H(+) = 2-C-methyl-D-erythritol 2,4-cyclic diphosphate + reduced [flavodoxin]. The protein operates within isoprenoid biosynthesis; isopentenyl diphosphate biosynthesis via DXP pathway; isopentenyl diphosphate from 1-deoxy-D-xylulose 5-phosphate: step 5/6. Converts 2C-methyl-D-erythritol 2,4-cyclodiphosphate (ME-2,4cPP) into 1-hydroxy-2-methyl-2-(E)-butenyl 4-diphosphate. This chain is 4-hydroxy-3-methylbut-2-en-1-yl diphosphate synthase (flavodoxin), found in Chlorobaculum tepidum (strain ATCC 49652 / DSM 12025 / NBRC 103806 / TLS) (Chlorobium tepidum).